A 96-amino-acid chain; its full sequence is Large ribosomal subunit protein eL14 (96 aa).

The protein belongs to the eukaryotic ribosomal protein eL14 family.

The chain is Large ribosomal subunit protein eL14 from Saccharolobus islandicus (strain M.14.25 / Kamchatka #1) (Sulfolobus islandicus).